The chain runs to 697 residues: Colicin-D (697 aa).

A TonB box motif is present at residues 17–24 (HSMVVWPS).

Belongs to the cloacin colicin family.

In terms of biological role, colicins are polypeptide toxins produced by and active against E.coli and closely related bacteria. Its function is as follows. Colicin D inhibits protein synthesis. The chain is Colicin-D (cda) from Escherichia coli.